The following is a 524-amino-acid chain: MASLGTSGQSVTEYVVRVPRNPSKRYSLMAFNAADKVDFSTWNQARMERDLSAKKMYQEEEMPESGAGSEYNRKQREESRRKKYGIILREFKVDDQPWILRVNGKAGRKYKGVKKGGVTENASYFIFTQCADGAFEAFPVSNWYNFTPVAKHRTLTAEEAEQEWERRNKVLNHFTIMQQRRLKDQVGDEDEDEEGGGKLEKGGKGKKKKKKSDLKIHDLEDDLELSSTESENSDEEGESRKKPQKKVPAKGGKKKKRKSDDEALEDSDDGDFEGQEVDYMSDESSSDEELPGKIKPAKEEEGPKGLDEQSESSEESEEEKAEEEEGEEEKKAPTPQDNKKKKKGDSSDESETSEDSDIDGASSSLFMQKKKTPPKKDKKGGSNSSSRGNSRPGTPSPDTGNTSSTLRAAASKLEQSKRGTVSNTPAAKRLKMEAGPQNTSGKSTPQPQSGKSTPSSGDIQLTEEAVRRYLTRKPMTTKDLLKKFQTKKTGLSSEQTVNVLAQILKRLNPDRKVVHDKMHFYLKE.

Disordered stretches follow at residues 56–76 (MYQE…RKQR) and 181–462 (RLKD…IQLT). The span at 242-257 (KPQKKVPAKGGKKKKR) shows a compositional bias: basic residues. The span at 262-289 (EALEDSDDGDFEGQEVDYMSDESSSDEE) shows a compositional bias: acidic residues. A compositionally biased stretch (basic and acidic residues) spans 290–307 (LPGKIKPAKEEEGPKGLD). 2 stretches are compositionally biased toward acidic residues: residues 308 to 327 (EQSE…EEGE) and 347 to 358 (SDESETSEDSDI). Basic residues predominate over residues 368-378 (QKKKTPPKKDK). Over residues 381 to 397 (GSNSSSRGNSRPGTPSP) the composition is skewed to low complexity. The span at 436 to 459 (PQNTSGKSTPQPQSGKSTPSSGDI) shows a compositional bias: polar residues.

Belongs to the TFIIF alpha subunit family. As to quaternary structure, heterodimer of an alpha and a beta subunit. Phosphorylated on Ser and other residues by TAF1 and casein kinase II-like kinases.

It localises to the nucleus. Its function is as follows. TFIIF is a general transcription initiation factor that binds to RNA polymerase II and helps to recruit it to the initiation complex in collaboration with TFIIB. It promotes transcription elongation. The protein is General transcription factor IIF subunit 1 (gtf2f1) of Xenopus laevis (African clawed frog).